We begin with the raw amino-acid sequence, 213 residues long: Ribosomal RNA small subunit methyltransferase G (213 aa).

S-adenosyl-L-methionine is bound by residues G55, 105-106, and R124; that span reads AE.

This sequence belongs to the methyltransferase superfamily. RNA methyltransferase RsmG family.

It localises to the cytoplasm. In terms of biological role, specifically methylates the N7 position of a guanine in 16S rRNA. The protein is Ribosomal RNA small subunit methyltransferase G of Fervidobacterium nodosum (strain ATCC 35602 / DSM 5306 / Rt17-B1).